A 1433-amino-acid polypeptide reads, in one-letter code: DNA-directed RNA polymerase subunit beta' (1433 aa).

Residues Cys66, Cys68, Cys81, and Cys84 each contribute to the Zn(2+) site. Residues Asp473, Asp475, and Asp477 each coordinate Mg(2+). Residues Cys815, Cys889, Cys896, and Cys899 each contribute to the Zn(2+) site.

Belongs to the RNA polymerase beta' chain family. The RNAP catalytic core consists of 2 alpha, 1 beta, 1 beta' and 1 omega subunit. When a sigma factor is associated with the core the holoenzyme is formed, which can initiate transcription. Mg(2+) is required as a cofactor. The cofactor is Zn(2+).

It catalyses the reaction RNA(n) + a ribonucleoside 5'-triphosphate = RNA(n+1) + diphosphate. DNA-dependent RNA polymerase catalyzes the transcription of DNA into RNA using the four ribonucleoside triphosphates as substrates. The sequence is that of DNA-directed RNA polymerase subunit beta' from Porphyromonas gingivalis (strain ATCC 33277 / DSM 20709 / CIP 103683 / JCM 12257 / NCTC 11834 / 2561).